A 555-amino-acid polypeptide reads, in one-letter code: Glucose-6-phosphate isomerase (555 aa).

Residue E353 is the Proton donor of the active site. Active-site residues include H384 and K516.

Belongs to the GPI family.

It is found in the cytoplasm. It carries out the reaction alpha-D-glucose 6-phosphate = beta-D-fructose 6-phosphate. It functions in the pathway carbohydrate biosynthesis; gluconeogenesis. The protein operates within carbohydrate degradation; glycolysis; D-glyceraldehyde 3-phosphate and glycerone phosphate from D-glucose: step 2/4. In terms of biological role, catalyzes the reversible isomerization of glucose-6-phosphate to fructose-6-phosphate. This Methylobacillus flagellatus (strain ATCC 51484 / DSM 6875 / VKM B-1610 / KT) protein is Glucose-6-phosphate isomerase.